The chain runs to 218 residues: uncharacterized protein (218 aa).

An RING-type zinc finger spans residues 154-199; the sequence is CFICTMEYSRTDKNLHPIILNCGHNLCRSCINKLTGNGIVKCPFDR.

This is an uncharacterized protein from Caenorhabditis elegans.